We begin with the raw amino-acid sequence, 230 residues long: AA9 family lytic polysaccharide monooxygenase H (230 aa).

An N-terminal signal peptide occupies residues 1–17 (MKTLSAGLLALASAASA). Cu(2+) contacts are provided by His-18 and His-89. A disulfide bridge links Cys-59 with Cys-178. Residues His-164 and Gln-173 each coordinate O2. Tyr-175 contributes to the Cu(2+) binding site.

Belongs to the polysaccharide monooxygenase AA9 family. Cu(2+) serves as cofactor.

The protein localises to the secreted. The enzyme catalyses [(1-&gt;4)-beta-D-glucosyl]n+m + reduced acceptor + O2 = 4-dehydro-beta-D-glucosyl-[(1-&gt;4)-beta-D-glucosyl]n-1 + [(1-&gt;4)-beta-D-glucosyl]m + acceptor + H2O.. Functionally, lytic polysaccharide monooxygenase (LPMO) that depolymerizes crystalline and amorphous polysaccharides via the oxidation of scissile alpha- or beta-(1-4)-glycosidic bonds, yielding primarly C1 oxidation products. Catalysis by LPMOs requires the reduction of the active-site copper from Cu(II) to Cu(I) by a reducing agent and H(2)O(2) or O(2) as a cosubstrate. Active on hemicelluloses, including xylan, glucomannan, and xyloglucan. Preferentially cleaves residual xylan in phosphoric acid-swollen cellulose (PASC). Moreover, when exposed to cellulose-xylan blends, shows a preference for xylan and for releasing oxidized xylooligosaccharides. Has no activity on ivory nut mannan (INM), a linear beta-1,4-linked mannan without substitutions. The protein is AA9 family lytic polysaccharide monooxygenase H of Malbranchea cinnamomea (Thermophilic fungus).